A 232-amino-acid chain; its full sequence is Putative N-acetylmannosamine-6-phosphate 2-epimerase (232 aa).

This sequence belongs to the NanE family.

It carries out the reaction an N-acyl-D-glucosamine 6-phosphate = an N-acyl-D-mannosamine 6-phosphate. The protein operates within amino-sugar metabolism; N-acetylneuraminate degradation; D-fructose 6-phosphate from N-acetylneuraminate: step 3/5. In terms of biological role, converts N-acetylmannosamine-6-phosphate (ManNAc-6-P) to N-acetylglucosamine-6-phosphate (GlcNAc-6-P). The sequence is that of Putative N-acetylmannosamine-6-phosphate 2-epimerase from Borreliella afzelii (strain PKo) (Borrelia afzelii).